The sequence spans 262 residues: Putative hydro-lyase Cbei_2760 (262 aa).

This sequence belongs to the D-glutamate cyclase family.

This is Putative hydro-lyase Cbei_2760 from Clostridium beijerinckii (strain ATCC 51743 / NCIMB 8052) (Clostridium acetobutylicum).